Consider the following 398-residue polypeptide: Vacuolar protease A (398 aa).

The first 18 residues, 1–18, serve as a signal peptide directing secretion; that stretch reads MKSTSLLTASVLLGSASA. Residues 19–70 constitute a propeptide, activation peptide; sequence AVHKLKLNKVPLDEQLYTHNIDAHVRALGQKYMGIRPNVHQELLEENSLNDM. The Peptidase A1 domain occupies 85–395; it reads YFSEISLGTP…DLGNNAVGLA (311 aa). The active site involves Asp-103. An intrachain disulfide couples Cys-116 to Cys-121. The N-linked (GlcNAc...) asparagine glycan is linked to Asn-138. The active site involves Asp-287. Cys-321 and Cys-354 are oxidised to a cystine. Asn-338 carries an N-linked (GlcNAc...) asparagine glycan.

Belongs to the peptidase A1 family.

It localises to the vacuole lumen. The protein resides in the secreted. It catalyses the reaction Hydrolysis of proteins with broad specificity for peptide bonds. Cleaves -Leu-Leu-|-Val-Tyr- bond in a synthetic substrate. Does not act on esters of Tyr or Arg.. Its function is as follows. Vacuolar aspartic endopeptidase which is probably also secreted and contributes to virulence. The chain is Vacuolar protease A (pep2) from Aspergillus fumigatus (strain ATCC MYA-4609 / CBS 101355 / FGSC A1100 / Af293) (Neosartorya fumigata).